A 284-amino-acid chain; its full sequence is Probable 3-mercaptopyruvate sulfurtransferase (284 aa).

Rhodanese domains follow at residues 17–138 (SEPD…ALTN) and 168–281 (GQPG…RPVA). R182 contributes to the substrate binding site. C241 serves as the catalytic Cysteine persulfide intermediate. The interval 241–247 (CGSGVTA) is substrate specificity.

It localises to the cytoplasm. The enzyme catalyses 2-oxo-3-sulfanylpropanoate + [thioredoxin]-dithiol = [thioredoxin]-disulfide + hydrogen sulfide + pyruvate + H(+). In terms of biological role, catalyzes the transfer of sulfur from 3-mercaptopyruvate to a thiol-containing acceptor to form an intramolecular disulfide releasing hydrogen sulfide and pyruvate. The protein is Probable 3-mercaptopyruvate sulfurtransferase (sseA) of Pseudomonas aeruginosa (strain ATCC 15692 / DSM 22644 / CIP 104116 / JCM 14847 / LMG 12228 / 1C / PRS 101 / PAO1).